We begin with the raw amino-acid sequence, 127 residues long: UPF0102 protein Paes_0016 (127 aa).

The protein belongs to the UPF0102 family.

The protein is UPF0102 protein Paes_0016 of Prosthecochloris aestuarii (strain DSM 271 / SK 413).